A 368-amino-acid chain; its full sequence is Dihydroorotate dehydrogenase (quinone) (368 aa).

Residues 67–71 and threonine 91 each bind FMN; that span reads AGFDK. Lysine 71 lines the substrate pocket. 116–120 is a substrate binding site; it reads NRMGF. 2 residues coordinate FMN: asparagine 146 and asparagine 179. Asparagine 179 lines the substrate pocket. Serine 182 functions as the Nucleophile in the catalytic mechanism. Asparagine 184 provides a ligand contact to substrate. Residues lysine 222 and threonine 250 each contribute to the FMN site. Residue 251–252 participates in substrate binding; sequence NT. FMN is bound by residues glycine 276, glycine 305, and 326–327; that span reads YS.

The protein belongs to the dihydroorotate dehydrogenase family. Type 2 subfamily. In terms of assembly, monomer. FMN is required as a cofactor.

The protein resides in the cell membrane. The catalysed reaction is (S)-dihydroorotate + a quinone = orotate + a quinol. It functions in the pathway pyrimidine metabolism; UMP biosynthesis via de novo pathway; orotate from (S)-dihydroorotate (quinone route): step 1/1. Functionally, catalyzes the conversion of dihydroorotate to orotate with quinone as electron acceptor. In Streptomyces avermitilis (strain ATCC 31267 / DSM 46492 / JCM 5070 / NBRC 14893 / NCIMB 12804 / NRRL 8165 / MA-4680), this protein is Dihydroorotate dehydrogenase (quinone).